Here is a 234-residue protein sequence, read N- to C-terminus: dTDP-4-amino-4,6-dideoxyglucose formyltransferase (234 aa).

DTDP-4-amino-4,6-dideoxy-alpha-D-glucose is bound by residues Asn9 and 62-64 (HCK). 65 to 67 (QRF) lines the (6R)-10-formyltetrahydrofolate pocket. The Proton acceptor role is filled by His81. 90–94 (GWFPQ) lines the dTDP-4-amino-4,6-dideoxy-alpha-D-glucose pocket. Residues Asp112, Asp116, and Lys175 each contribute to the (6R)-10-formyltetrahydrofolate site. Asn209 is a binding site for dTDP-4-amino-4,6-dideoxy-alpha-D-glucose.

The protein belongs to the dTDP-Qui4N formyltransferase family. Homodimer.

The catalysed reaction is dTDP-4-amino-4,6-dideoxy-alpha-D-glucose + (6R)-10-formyltetrahydrofolate = dTDP-4-formamido-4,6-dideoxy-alpha-D-glucose + (6S)-5,6,7,8-tetrahydrofolate + H(+). In terms of biological role, sugar N-formyltransferase that catalyzes the conversion of dTDP-4-amino-4,6-dideoxyglucose into dTDP-4-formamido-4,6-dideoxyglucose using N(10)-formyltetrahydrofolate as the carbon source. Plays a role in virulence. This chain is dTDP-4-amino-4,6-dideoxyglucose formyltransferase, found in Mycobacterium bovis (strain ATCC BAA-935 / AF2122/97).